The sequence spans 603 residues: Elongation factor 4 (603 aa).

In terms of domain architecture, tr-type G spans 7-189; that stretch reads VRIRNFCIIA…AVVERIPPPP (183 aa). GTP contacts are provided by residues 19–24 and 136–139; these read DHGKST and NKID.

This sequence belongs to the TRAFAC class translation factor GTPase superfamily. Classic translation factor GTPase family. LepA subfamily.

It localises to the cell inner membrane. The enzyme catalyses GTP + H2O = GDP + phosphate + H(+). Required for accurate and efficient protein synthesis under certain stress conditions. May act as a fidelity factor of the translation reaction, by catalyzing a one-codon backward translocation of tRNAs on improperly translocated ribosomes. Back-translocation proceeds from a post-translocation (POST) complex to a pre-translocation (PRE) complex, thus giving elongation factor G a second chance to translocate the tRNAs correctly. Binds to ribosomes in a GTP-dependent manner. The sequence is that of Elongation factor 4 from Trichormus variabilis (strain ATCC 29413 / PCC 7937) (Anabaena variabilis).